Here is a 123-residue protein sequence, read N- to C-terminus: Double-stranded DNA deaminase immunity protein (123 aa).

As to quaternary structure, the toxic domain forms a 1:1 complex with the DddI immunity protein. This protein blocks the active site of the toxin.

In terms of biological role, immunity protein component of a toxin-immunity protein module, which functions as a cellular contact-dependent growth inhibition (CDI) system. CDI modules allow bacteria to communicate with and inhibit the growth of closely related neighboring bacteria in a contact-dependent fashion. Bacteria that have this module inhibit or kill bacteria without it, giving them a growth advantage. Specifically inhibits the toxic activity of cognate toxin DddA (C-terminal 163 residue fragment) upon expression in E.coli. In Burkholderia cenocepacia (strain H111), this protein is Double-stranded DNA deaminase immunity protein.